We begin with the raw amino-acid sequence, 455 residues long: tRNA modification GTPase MnmE (455 aa).

(6S)-5-formyl-5,6,7,8-tetrahydrofolate contacts are provided by R24, E81, and K121. Residues 217–378 (GMKVVIAGRP…LKEHLKDIMG (162 aa)) enclose the TrmE-type G domain. N227 is a binding site for K(+). GTP is bound by residues 227 to 232 (NAGKSS), 246 to 252 (TDIAGTT), 271 to 274 (DTAG), and 336 to 339 (NKAD). Residue S231 coordinates Mg(2+). Positions 246, 248, and 251 each coordinate K(+). T252 serves as a coordination point for Mg(2+). K455 is a binding site for (6S)-5-formyl-5,6,7,8-tetrahydrofolate.

Belongs to the TRAFAC class TrmE-Era-EngA-EngB-Septin-like GTPase superfamily. TrmE GTPase family. Homodimer. Heterotetramer of two MnmE and two MnmG subunits. K(+) serves as cofactor.

The protein resides in the cytoplasm. Its function is as follows. Exhibits a very high intrinsic GTPase hydrolysis rate. Involved in the addition of a carboxymethylaminomethyl (cmnm) group at the wobble position (U34) of certain tRNAs, forming tRNA-cmnm(5)s(2)U34. The protein is tRNA modification GTPase MnmE of Psychromonas ingrahamii (strain DSM 17664 / CCUG 51855 / 37).